A 424-amino-acid chain; its full sequence is Hemagglutinin-esterase (424 aa).

Signal peptides lie at residues 1–16 and 1–18; these read MFLLLRFVLVSCIIGS and MFLLLRFVLVSCIIGSLG. The esterase domain 1 stretch occupies residues 7 to 127; the sequence is FVLVSCIIGS…SNDIWMQNKG (121 aa). Residues 17 to 392 lie on the Virion surface side of the membrane; it reads LGFDNPPTNV…PICVYDPLPL (376 aa). The active-site Nucleophile is the Ser-40. Residues Cys-44 and Cys-65 are joined by a disulfide bond. 5 N-linked (GlcNAc...) asparagine; by host glycosylation sites follow: Asn-54, Asn-89, Asn-153, Asn-236, and Asn-301. Cystine bridges form between Cys-113-Cys-162, Cys-197-Cys-276, and Cys-205-Cys-249. The receptor binding stretch occupies residues 128 to 266; sequence LFYTQVYKNM…GNYLAISNEL (139 aa). Positions 267-379 are esterase domain 2; that stretch reads LLTVPTKAIC…RCPTAADINT (113 aa). Cys-307 and Cys-312 are disulfide-bonded. A glycan (N-linked (GlcNAc...) asparagine; by host) is linked at Asn-316. Residues Asp-326 and His-329 each act as charge relay system in the active site. Cysteines 347 and 371 form a disulfide. Asn-358 carries an N-linked (GlcNAc...) asparagine; by host glycan. A helical transmembrane segment spans residues 393–413; that stretch reads ILLGILLGVAVIIIVVLLLYF. The Intravirion portion of the chain corresponds to 414–424; it reads MVDNGTRLHDA. The N-linked (GlcNAc...) asparagine; by host glycan is linked to Asn-417.

Belongs to the influenza type C/coronaviruses hemagglutinin-esterase family. In terms of assembly, homodimer; disulfide-linked. Forms a complex with the M protein in the pre-Golgi. Associates then with S-M complex to form a ternary complex S-M-HE. Post-translationally, N-glycosylated in the host RER.

It localises to the virion membrane. It is found in the host cell membrane. It catalyses the reaction N-acetyl-9-O-acetylneuraminate + H2O = N-acetylneuraminate + acetate + H(+). The enzyme catalyses N-acetyl-4-O-acetylneuraminate + H2O = N-acetylneuraminate + acetate + H(+). Structural protein that makes short spikes at the surface of the virus. Contains receptor binding and receptor-destroying activities. Mediates de-O-acetylation of N-acetyl-4-O-acetylneuraminic acid, which is probably the receptor determinant recognized by the virus on the surface of erythrocytes and susceptible cells. This receptor-destroying activity is important for virus release as it probably helps preventing self-aggregation and ensures the efficient spread of the progeny virus from cell to cell. May serve as a secondary viral attachment protein for initiating infection, the spike protein being the major one. May become a target for both the humoral and the cellular branches of the immune system. This is Hemagglutinin-esterase from Bos taurus (Bovine).